A 139-amino-acid polypeptide reads, in one-letter code: Thioredoxin H-type (139 aa).

The region spanning 20-132 (ELAGGNVHLI…LHKKITAILD (113 aa)) is the Thioredoxin domain. Catalysis depends on nucleophile residues Cys-58 and Cys-61. Residues Cys-58 and Cys-61 are joined by a disulfide bond.

It is found in the cytoplasm. Participates in various redox reactions through the reversible oxidation of the active center dithiol to a disulfide. The H form is known to activate a number of cytosolic enzymes. This Populus jackii (Balm of Gilead) protein is Thioredoxin H-type.